The following is a 588-amino-acid chain: Transcription factor tau 60 kDa subunit (588 aa).

Residues 399–588 (LPKLPENFSM…VYCGTTLEVM (190 aa)) are sufficient for SPT15-binding.

Heterodimer with TFC6. Component of the TFIIIC complex composed of TFC1, TFC3, TFC4, TFC6, TFC7 and TFC8. The subunits are organized in two globular domains, tauA and tauB, connected by a proteolysis-sensitive and flexible linker. Interacts with SPT15 and directly with TFC6.

The protein resides in the nucleus. TFIIIC mediates tRNA and 5S RNA gene activation by binding to intragenic promoter elements. Upstream of the transcription start site, TFIIIC assembles the initiation complex TFIIIB-TFIIIC-tDNA, which is sufficient for RNA polymerase III recruitment and function. Part of the tauB domain of TFIIIC that binds boxB DNA promoter sites of tRNA and similar genes. Plays a role in TFIIB assembly through its interaction with SPT15/TBP. Essential for cell viability. This Saccharomyces cerevisiae (strain ATCC 204508 / S288c) (Baker's yeast) protein is Transcription factor tau 60 kDa subunit (TFC8).